Here is a 609-residue protein sequence, read N- to C-terminus: Tyrosine-protein kinase transforming protein Fes (609 aa).

Disordered regions lie at residues 1-20 and 152-208; these read AARA…PQGH and RDSA…GGRT. The F-BAR; degenerate domain occupies 8–174; it reads MGFSSELCSP…SKDKDRDKAK (167 aa). 2 stretches are compositionally biased toward basic and acidic residues: residues 160 to 175 and 190 to 206; these read KYQE…KAKL and QDDR…REGG. In terms of domain architecture, SH2 spans 247 to 336; sequence WYHGALPRAE…KSGIVLNRAV (90 aa). Residues 348 to 609 form the Protein kinase domain; that stretch reads LVLGEQIGRG…ELQSIRKRHR (262 aa). Residues 354–362 and Lys-377 each bind ATP; that span reads IGRGNFGEV. The Proton acceptor role is filled by Asp-470. Tyr-500 carries the post-translational modification Phosphotyrosine; by autocatalysis.

It belongs to the protein kinase superfamily. Tyr protein kinase family. Fes/fps subfamily.

It carries out the reaction L-tyrosyl-[protein] + ATP = O-phospho-L-tyrosyl-[protein] + ADP + H(+). The polypeptide is Tyrosine-protein kinase transforming protein Fes (V-FES) (Felidae (cat family)).